Here is a 117-residue protein sequence, read N- to C-terminus: MDWTWRILFLVAAATGAHSQVQLVQSGAEVKKPGASVKVSCKASGYTFTSYAMHWVRQAPGQRLEWMGWINAGNGNTKYSQKFQGRVTITRDTSASTAYMELSSLRSEDTAVYYCAR.

The N-terminal stretch at 1 to 19 (MDWTWRILFLVAAATGAHS) is a signal peptide. The segment at 20–44 (QVQLVQSGAEVKKPGASVKVSCKAS) is framework-1. Positions 20-117 (QVQLVQSGAE…EDTAVYYCAR (98 aa)) constitute an Ig-like domain. Cysteines 41 and 115 form a disulfide. The complementarity-determining-1 stretch occupies residues 45–52 (GYTFTSYA). The framework-2 stretch occupies residues 53–69 (MHWVRQAPGQRLEWMGW). Residues 70-77 (INAGNGNT) form a complementarity-determining-2 region. The interval 78 to 115 (KYSQKFQGRVTITRDTSASTAYMELSSLRSEDTAVYYC) is framework-3. The complementarity-determining-3 stretch occupies residues 116–117 (AR).

As to quaternary structure, immunoglobulins are composed of two identical heavy chains and two identical light chains; disulfide-linked.

The protein localises to the secreted. It localises to the cell membrane. V region of the variable domain of immunoglobulin heavy chains that participates in the antigen recognition. Immunoglobulins, also known as antibodies, are membrane-bound or secreted glycoproteins produced by B lymphocytes. In the recognition phase of humoral immunity, the membrane-bound immunoglobulins serve as receptors which, upon binding of a specific antigen, trigger the clonal expansion and differentiation of B lymphocytes into immunoglobulins-secreting plasma cells. Secreted immunoglobulins mediate the effector phase of humoral immunity, which results in the elimination of bound antigens. The antigen binding site is formed by the variable domain of one heavy chain, together with that of its associated light chain. Thus, each immunoglobulin has two antigen binding sites with remarkable affinity for a particular antigen. The variable domains are assembled by a process called V-(D)-J rearrangement and can then be subjected to somatic hypermutations which, after exposure to antigen and selection, allow affinity maturation for a particular antigen. The chain is Immunoglobulin heavy variable 1-3 from Homo sapiens (Human).